A 454-amino-acid polypeptide reads, in one-letter code: MLETEHANTEVHELCRQMIARIEKYGTLEGFSDSDILEVLKTIKEILEPLPCLIEIIAPVVVFGDIHGQLGDLLQFTNEVGRPPDFQYLFLGDYVDRGPNSLEVTVWLFCMKILFSKKVHLLRGNHEVRRVNTMYGFKEEMMRKRNSHLWKVFNDVFAELSICASINRKILCMHGGISPKIESWDSLTGMTKPRVHGDCEHGLIVDLIWSDPNRKDDTIQFNKMRGISTLFGKSVVDNLCTTLAIDLIIRAHEMKEKGHTFEFDNRLLTVFSAPYYSGHNSNLGSVATISKSLKLRIVTLKPNKGYDRSKLDKRTLHDFEKNFQPLDENPRKNISCQFNVPPNGQKMSPFLGEYSMFAHETQFCKKDNETPVKKPYSSNQDEDHSVLDMIRKTQKGYGVEVSLKDKVMSLESIRKKLGMTTSTTPPPPRTPSPDAPLAQSPPIPRSPPSSTENA.

Mn(2+)-binding residues include aspartate 65, histidine 67, aspartate 93, and asparagine 125. The Proton donor role is filled by histidine 126. The Mn(2+) site is built by histidine 174 and histidine 252. The disordered stretch occupies residues 414-454 (RKKLGMTTSTTPPPPRTPSPDAPLAQSPPIPRSPPSSTENA). The span at 424-447 (TPPPPRTPSPDAPLAQSPPIPRSP) shows a compositional bias: pro residues.

This sequence belongs to the PPP phosphatase family. PP-1 subfamily. Requires Mn(2+) as cofactor.

The catalysed reaction is O-phospho-L-seryl-[protein] + H2O = L-seryl-[protein] + phosphate. It carries out the reaction O-phospho-L-threonyl-[protein] + H2O = L-threonyl-[protein] + phosphate. The sequence is that of Putative serine/threonine-protein phosphatase C27B7.6 from Caenorhabditis elegans.